A 96-amino-acid chain; its full sequence is UPF0235 protein YggU (96 aa).

The protein belongs to the UPF0235 family.

This chain is UPF0235 protein YggU, found in Salmonella typhi.